The following is a 475-amino-acid chain: Ribulose bisphosphate carboxylase large chain (475 aa).

Residues 1–2 (MS) constitute a propeptide that is removed on maturation. P3 is modified (N-acetylproline). K14 is modified (N6,N6,N6-trimethyllysine). N123 and T173 together coordinate substrate. The active-site Proton acceptor is K175. K177 contacts substrate. Mg(2+) is bound by residues K201, D203, and E204. At K201 the chain carries N6-carboxylysine. H294 (proton acceptor) is an active-site residue. Substrate is bound by residues R295, H327, and S379.

This sequence belongs to the RuBisCO large chain family. Type I subfamily. Heterohexadecamer of 8 large chains and 8 small chains; disulfide-linked. The disulfide link is formed within the large subunit homodimers. The cofactor is Mg(2+). In terms of processing, the disulfide bond which can form in the large chain dimeric partners within the hexadecamer appears to be associated with oxidative stress and protein turnover.

It is found in the plastid. Its subcellular location is the chloroplast. It catalyses the reaction 2 (2R)-3-phosphoglycerate + 2 H(+) = D-ribulose 1,5-bisphosphate + CO2 + H2O. The enzyme catalyses D-ribulose 1,5-bisphosphate + O2 = 2-phosphoglycolate + (2R)-3-phosphoglycerate + 2 H(+). In terms of biological role, ruBisCO catalyzes two reactions: the carboxylation of D-ribulose 1,5-bisphosphate, the primary event in carbon dioxide fixation, as well as the oxidative fragmentation of the pentose substrate in the photorespiration process. Both reactions occur simultaneously and in competition at the same active site. The chain is Ribulose bisphosphate carboxylase large chain from Oenothera argillicola (Appalachian evening primrose).